Here is a 625-residue protein sequence, read N- to C-terminus: Interferon-induced GTP-binding protein MxE (625 aa).

The Dynamin-type G domain occupies 40–313 (DLNLPAIAVI…LVEHIAKNLP (274 aa)). The segment at 50 to 57 (GDQSSGKS) is G1 motif. 50–57 (GDQSSGKS) contacts GTP. Residues 75–77 (VTR) form a G2 motif region. The G3 motif stretch occupies residues 151 to 154 (DLPG). GTP-binding positions include 151–155 (DLPGI) and 220–223 (TKPD). The tract at residues 220 to 223 (TKPD) is G4 motif. Residues 252–255 (KCRG) form a G5 motif region. Residues 536–625 (VREMAYHLTS…RVLSKFVHSA (90 aa)) form the GED domain.

Belongs to the TRAFAC class dynamin-like GTPase superfamily. Dynamin/Fzo/YdjA family.

It localises to the cytoplasm. The protein is Interferon-induced GTP-binding protein MxE (mxe) of Danio rerio (Zebrafish).